We begin with the raw amino-acid sequence, 471 residues long: Argininosuccinate lyase (471 aa).

This sequence belongs to the lyase 1 family. Argininosuccinate lyase subfamily.

The protein resides in the cytoplasm. It catalyses the reaction 2-(N(omega)-L-arginino)succinate = fumarate + L-arginine. The protein operates within amino-acid biosynthesis; L-arginine biosynthesis; L-arginine from L-ornithine and carbamoyl phosphate: step 3/3. The sequence is that of Argininosuccinate lyase from Ralstonia pickettii (strain 12J).